A 912-amino-acid chain; its full sequence is Protein translocase subunit SecA (912 aa).

ATP is bound by residues Gln87, 105-109 (GEGKT), and Asp508. Residues 869–912 (EQMQGGNAPVPVSQVTRDEPKVGRNDPCPCGSGKKYKHCHGQLS) are disordered. Cys896, Cys898, Cys907, and His908 together coordinate Zn(2+). Over residues 902 to 912 (KKYKHCHGQLS) the composition is skewed to basic residues.

Belongs to the SecA family. In terms of assembly, monomer and homodimer. Part of the essential Sec protein translocation apparatus which comprises SecA, SecYEG and auxiliary proteins SecDF-YajC and YidC. Zn(2+) is required as a cofactor.

It is found in the cell inner membrane. The protein localises to the cytoplasm. It carries out the reaction ATP + H2O + cellular proteinSide 1 = ADP + phosphate + cellular proteinSide 2.. Its function is as follows. Part of the Sec protein translocase complex. Interacts with the SecYEG preprotein conducting channel. Has a central role in coupling the hydrolysis of ATP to the transfer of proteins into and across the cell membrane, serving both as a receptor for the preprotein-SecB complex and as an ATP-driven molecular motor driving the stepwise translocation of polypeptide chains across the membrane. The chain is Protein translocase subunit SecA from Xanthomonas axonopodis pv. citri (strain 306).